A 92-amino-acid chain; its full sequence is Small ribosomal subunit protein uS19c (92 aa).

It belongs to the universal ribosomal protein uS19 family.

The protein resides in the plastid. It localises to the chloroplast. Functionally, protein S19 forms a complex with S13 that binds strongly to the 16S ribosomal RNA. This Chloranthus spicatus (Chulantree) protein is Small ribosomal subunit protein uS19c.